We begin with the raw amino-acid sequence, 1637 residues long: Glutamate rich 3 (1637 aa).

Disordered regions lie at residues 145 to 192, 408 to 453, 478 to 814, 1111 to 1194, 1238 to 1445, and 1457 to 1637; these read PLTL…GSLL, PSST…KESC, EWKG…QDAG, VGTS…SPRE, IEKV…SGER, and KAEN…RETA. Residues 169–185 are compositionally biased toward polar residues; sequence LLSSRQTRNGSKITSGS. 3 stretches are compositionally biased toward basic and acidic residues: residues 416-426, 443-452, and 478-487; these read EKITEKKEEPP, KRNEMERKES, and EWKGKSGRDV. A compositionally biased stretch (acidic residues) spans 500–523; the sequence is YEEDFEVDDEKQDEKVDEDEDQAD. A compositionally biased stretch (basic and acidic residues) spans 534–557; it reads TESEKDNRNPEKKIETSSEKAHDS. A compositionally biased stretch (acidic residues) spans 558 to 572; that stretch reads ENEDTGCSDSEEDDR. 2 stretches are compositionally biased toward low complexity: residues 579-590 and 608-617; these read SSISSRSHPYSS and EEGSSRSSSS. 8 stretches are compositionally biased toward basic and acidic residues: residues 619–638, 677–693, 769–802, 1115–1130, 1264–1307, 1319–1329, 1342–1357, and 1402–1412; these read DLRE…KYLE, ESEH…EVRA, QEMH…ESGM, EVKE…KTDG, LKTE…KDVE, KLLEDPPKERA, SPKE…KGGE, and RCEEWAAKELD. The segment covering 1476-1487 has biased composition (polar residues); that stretch reads VTGSLTGQNWNM. Composition is skewed to basic and acidic residues over residues 1550–1568, 1589–1599, and 1614–1637; these read AEER…KVAV, AQDREGGETKA, and GKDE…RETA.

The protein localises to the cell projection. It is found in the cilium. Its subcellular location is the cytoplasm. Component of the primary cilium that controls cilium formation and length. May function within retrograde intraflagellar transport (IFT)-associated pathways to remove signaling proteins from primary cilia. Also involved in neuronal vesicle biogenesis and neurotransmitter vesicular function. This Mus musculus (Mouse) protein is Glutamate rich 3.